A 1024-amino-acid chain; its full sequence is PH and SEC7 domain-containing protein 1 (1024 aa).

The disordered stretch occupies residues 67–96 (CTPLRAPPSPHIAPSPWGPSSPTGQPPPGA). Residues 71–95 (RAPPSPHIAPSPWGPSSPTGQPPPG) show a composition bias toward pro residues. Phosphoserine is present on residues Ser-126 and Ser-156. 4 disordered regions span residues 154-195 (STSD…LPNG), 250-277 (PSSG…VAVG), 307-401 (REEA…GPDS), and 434-536 (PTQS…LDST). Residues 348 to 365 (NEDDEAGGEEDVDDEVFE) show a composition bias toward acidic residues. Over residues 445–463 (PPQPPAPRPDPPAPAPLAP) the composition is skewed to pro residues. A compositionally biased stretch (basic and acidic residues) spans 495–507 (PRKELPSPSHSED). The 195-residue stretch at 512–706 (GAAPLGSEPP…KALYSSIKNE (195 aa)) folds into the SEC7 domain. At Ser-720 the chain carries Phosphoserine. A PH domain is found at 756–869 (AVYKHGALVR…WITRINVVAA (114 aa)). 2 coiled-coil regions span residues 898 to 924 (LSQE…HRAA) and 956 to 983 (AALL…AGST). Residues 976–1024 (ALAQAGSTEDGCPPPHSSPSLRPKPTSQPRAQRPGSETRAGAGSTRPKP) form a disordered region.

It belongs to the PSD family. Interacts with ACTN1. Interacts (ARF6-bound form) with KCNK1; does not interact with KCNK1 in the absence of ARF6. In terms of tissue distribution, highest expression detected in brain and some expression detected also in uterus, stomach, ovary and intestine, with isoform 2 being expressed at the highest levels. In the brain, isoform 1 is highly expressed in the strata oriens, radiatum, lacunosum-moleculare of the hippocampal CA1-3 regions and the dentate molecular layer of the hippocampal formation, with lower levels detected in the neuronal cell layers and the stratum lucidum (at protein level). Not detected in tongue, thymus, spleen, lung, heart, liver and kidney.

It localises to the cell membrane. Its subcellular location is the cell projection. It is found in the ruffle. The protein localises to the ruffle membrane. The protein resides in the cleavage furrow. Functionally, guanine nucleotide exchange factor for ARF6. Isoform 2 and isoform 3 induce cytoskeletal remodeling, but lead to distinct morphological changes in HeLa cells: isoform 2 induces cell elongation and formation of actin-rich protrusions, whereas isoform 3 promotes the formation of membrane ruffles and loss of stress fibers. This Mus musculus (Mouse) protein is PH and SEC7 domain-containing protein 1 (Psd).